Here is a 463-residue protein sequence, read N- to C-terminus: L-seryl-tRNA(Sec) selenium transferase (463 aa).

Residue lysine 295 is modified to N6-(pyridoxal phosphate)lysine.

This sequence belongs to the SelA family. As to quaternary structure, homodecamer; pentamer of dimers. Binds only one seryl-tRNA(Sec) per dimer. It depends on pyridoxal 5'-phosphate as a cofactor.

It is found in the cytoplasm. The catalysed reaction is L-seryl-tRNA(Sec) + selenophosphate + H(+) = L-selenocysteinyl-tRNA(Sec) + phosphate. It participates in aminoacyl-tRNA biosynthesis; selenocysteinyl-tRNA(Sec) biosynthesis; selenocysteinyl-tRNA(Sec) from L-seryl-tRNA(Sec) (bacterial route): step 1/1. In terms of biological role, converts seryl-tRNA(Sec) to selenocysteinyl-tRNA(Sec) required for selenoprotein biosynthesis. This chain is L-seryl-tRNA(Sec) selenium transferase, found in Shigella sonnei (strain Ss046).